Reading from the N-terminus, the 425-residue chain is Serine--tRNA ligase (425 aa).

Positions 108 to 134 (YPNLPSEACPDGRSEDDNKEVRRWGDP) are disordered. Over residues 117–134 (PDGRSEDDNKEVRRWGDP) the composition is skewed to basic and acidic residues. 233-235 (TAE) is an L-serine binding site. 264–266 (RRE) provides a ligand contact to ATP. E287 contributes to the L-serine binding site. 351 to 354 (EISS) is a binding site for ATP. S385 is an L-serine binding site.

The protein belongs to the class-II aminoacyl-tRNA synthetase family. Type-1 seryl-tRNA synthetase subfamily. As to quaternary structure, homodimer. The tRNA molecule binds across the dimer.

Its subcellular location is the cytoplasm. It carries out the reaction tRNA(Ser) + L-serine + ATP = L-seryl-tRNA(Ser) + AMP + diphosphate + H(+). It catalyses the reaction tRNA(Sec) + L-serine + ATP = L-seryl-tRNA(Sec) + AMP + diphosphate + H(+). It participates in aminoacyl-tRNA biosynthesis; selenocysteinyl-tRNA(Sec) biosynthesis; L-seryl-tRNA(Sec) from L-serine and tRNA(Sec): step 1/1. In terms of biological role, catalyzes the attachment of serine to tRNA(Ser). Is also able to aminoacylate tRNA(Sec) with serine, to form the misacylated tRNA L-seryl-tRNA(Sec), which will be further converted into selenocysteinyl-tRNA(Sec). The chain is Serine--tRNA ligase from Synechococcus sp. (strain CC9311).